Reading from the N-terminus, the 147-residue chain is Ubiquitin-conjugating enzyme E2-17 kDa (147 aa).

The 147-residue stretch at 1–147 folds into the UBC core domain; the sequence is MALKRINKEL…AREWTRKYAM (147 aa). Residue cysteine 85 is the Glycyl thioester intermediate of the active site.

The protein belongs to the ubiquitin-conjugating enzyme family.

It carries out the reaction S-ubiquitinyl-[E1 ubiquitin-activating enzyme]-L-cysteine + [E2 ubiquitin-conjugating enzyme]-L-cysteine = [E1 ubiquitin-activating enzyme]-L-cysteine + S-ubiquitinyl-[E2 ubiquitin-conjugating enzyme]-L-cysteine.. It functions in the pathway protein modification; protein ubiquitination. In terms of biological role, catalyzes the covalent attachment of ubiquitin to other proteins. Mediates the selective degradation of short-lived and abnormal proteins. Required for proper telomere behavior during cell divisions and possibly for ubiquitination of proteins involved in postmeiotic stages of spermatogenesis. Deletion mutations are lethal in homozygotes. This is Ubiquitin-conjugating enzyme E2-17 kDa (eff) from Drosophila melanogaster (Fruit fly).